Consider the following 224-residue polypeptide: Cytidylate kinase (224 aa).

An ATP-binding site is contributed by 12-20 (GPAGAGKST).

Belongs to the cytidylate kinase family. Type 1 subfamily.

The protein resides in the cytoplasm. It catalyses the reaction CMP + ATP = CDP + ADP. The catalysed reaction is dCMP + ATP = dCDP + ADP. This chain is Cytidylate kinase, found in Caldanaerobacter subterraneus subsp. tengcongensis (strain DSM 15242 / JCM 11007 / NBRC 100824 / MB4) (Thermoanaerobacter tengcongensis).